A 1317-amino-acid chain; its full sequence is Kinesin-like protein KIF16B (1317 aa).

In terms of domain architecture, Kinesin motor spans 3–358; that stretch reads SVKVAVRVRP…LRYANRAKNI (356 aa). Residue 102-109 participates in ATP binding; that stretch reads GQTGSGKS. Residues 370–425 adopt a coiled-coil conformation; it reads VKLIRELRAEIARLKTLLAQGNQIALLDSPTALSMEEKLQQNEARVQELTKEWTNK. A Phosphoserine modification is found at Ser-398. The 52-residue stretch at 478-529 folds into the FHA domain; that stretch reads TYVGRDDASTEQDIVLHGLDLESEHCIFENIGGTVTLIPLSGSQCSVNGVQI. Residue Thr-577 is modified to Phosphothreonine. Phosphoserine is present on Ser-582. 2 coiled-coil regions span residues 595–882 and 936–1087; these read GLEF…DESV and LSLD…VQKD. Polar residues predominate over residues 1036 to 1048; sequence LASLNSGSREQSG. The tract at residues 1036–1057 is disordered; that stretch reads LASLNSGSREQSGLQASLEAEQ. Ser-1052 carries the post-translational modification Phosphoserine. The PX domain maps to 1182–1296; sequence DPIKISIPRY…KVGLTLSKHT (115 aa).

Belongs to the TRAFAC class myosin-kinesin ATPase superfamily. Kinesin family. As to quaternary structure, interacts with RAB14. Interacts with PTPN21. Primarily expressed in brain. Also present in kidney, liver, intestine, placenta, leukocytes, heart and skeletal muscle (at protein level).

Its subcellular location is the cytoplasm. The protein resides in the cytoskeleton. It is found in the early endosome membrane. It localises to the spindle. Its function is as follows. Plus end-directed microtubule-dependent motor protein involved in endosome transport and receptor recycling and degradation. Regulates the plus end motility of early endosomes and the balance between recycling and degradation of receptors such as EGF receptor (EGFR) and FGF receptor (FGFR). Regulates the Golgi to endosome transport of FGFR-containing vesicles during early development, a key process for developing basement membrane and epiblast and primitive endoderm lineages during early postimplantation development. The chain is Kinesin-like protein KIF16B (KIF16B) from Homo sapiens (Human).